Reading from the N-terminus, the 97-residue chain is Acylphosphatase (97 aa).

Residues 7 to 97 (RLTAWVHGHV…QERFEGFVER (91 aa)) form the Acylphosphatase-like domain. Active-site residues include arginine 22 and asparagine 40.

This sequence belongs to the acylphosphatase family.

It carries out the reaction an acyl phosphate + H2O = a carboxylate + phosphate + H(+). In Mycobacterium avium (strain 104), this protein is Acylphosphatase (acyP).